Reading from the N-terminus, the 256-residue chain is 1-(5-phosphoribosyl)-5-[(5-phosphoribosylamino)methylideneamino] imidazole-4-carboxamide isomerase (256 aa).

The active-site Proton acceptor is aspartate 8. Residue aspartate 130 is the Proton donor of the active site.

The protein belongs to the HisA/HisF family.

Its subcellular location is the cytoplasm. The catalysed reaction is 1-(5-phospho-beta-D-ribosyl)-5-[(5-phospho-beta-D-ribosylamino)methylideneamino]imidazole-4-carboxamide = 5-[(5-phospho-1-deoxy-D-ribulos-1-ylimino)methylamino]-1-(5-phospho-beta-D-ribosyl)imidazole-4-carboxamide. It functions in the pathway amino-acid biosynthesis; L-histidine biosynthesis; L-histidine from 5-phospho-alpha-D-ribose 1-diphosphate: step 4/9. In Chlorobium luteolum (strain DSM 273 / BCRC 81028 / 2530) (Pelodictyon luteolum), this protein is 1-(5-phosphoribosyl)-5-[(5-phosphoribosylamino)methylideneamino] imidazole-4-carboxamide isomerase.